The primary structure comprises 868 residues: Translation initiation factor IF-2 (868 aa).

Disordered regions lie at residues 49-72 (LSKQ…TSTL) and 92-276 (KRSD…EHLK). Residues 92–240 (KRSDIEEQQR…KKAEAEEVHL (149 aa)) show a composition bias toward basic and acidic residues. The tr-type G domain occupies 368-537 (SRAPVVTIMG…VLQSELLDLQ (170 aa)). The segment at 377-384 (GHVDHGKT) is G1. Position 377-384 (377-384 (GHVDHGKT)) interacts with GTP. Positions 402–406 (GITQH) are G2. The tract at residues 423–426 (DTPG) is G3. GTP-binding positions include 423-427 (DTPGH) and 477-480 (NKMD). A G4 region spans residues 477 to 480 (NKMD). Residues 513–515 (SAK) form a G5 region.

The protein belongs to the TRAFAC class translation factor GTPase superfamily. Classic translation factor GTPase family. IF-2 subfamily.

The protein resides in the cytoplasm. One of the essential components for the initiation of protein synthesis. Protects formylmethionyl-tRNA from spontaneous hydrolysis and promotes its binding to the 30S ribosomal subunits. Also involved in the hydrolysis of GTP during the formation of the 70S ribosomal complex. In Alteromonas mediterranea (strain DSM 17117 / CIP 110805 / LMG 28347 / Deep ecotype), this protein is Translation initiation factor IF-2.